Consider the following 397-residue polypeptide: MKLTTFAPEFAEALPILEQIEAAGFEAYFVGGSVRDNLLGLPIHDVDIATSAYPAEIKQIFKRTVDTGIQHGTVMILDHGNGYEVTTFRTETGYQDFRRPDSVTFVRSLEEDLKRRDFTINALAMRADGEIIDLFDGIADLKAHKIRAVGVADERFHEDALRMMRAVRFESQLGFSVTETTQAAIEKHAALLEKIAIERIHVEFMKLMQGIERQNGLRTFIDTGLYRYCPDLADQLLALERLTALPTEQLHDESAVWLVVTYLLGQTPAQAGRFLKHWKSANDVIDAVKAGLVLLPKLLTATADQWDLYQAGQAVLVISLQIAQMVTTATIPTADWLERYDRLQIKQKADLAINGQILMQNGFQPGPILGKALAILERKVVLDELPNTTEALLKAAK.

The ATP site is built by Gly32 and Arg35. 2 residues coordinate CTP: Gly32 and Arg35. Mg(2+)-binding residues include Asp45 and Asp47. Positions 116, 159, 162, 165, and 168 each coordinate ATP. CTP is bound by residues Arg116, Asp159, Arg162, Arg165, and Arg168.

The protein belongs to the tRNA nucleotidyltransferase/poly(A) polymerase family. Bacterial CCA-adding enzyme type 3 subfamily. As to quaternary structure, homodimer. Requires Mg(2+) as cofactor.

The catalysed reaction is a tRNA precursor + 2 CTP + ATP = a tRNA with a 3' CCA end + 3 diphosphate. It carries out the reaction a tRNA with a 3' CCA end + 2 CTP + ATP = a tRNA with a 3' CCACCA end + 3 diphosphate. In terms of biological role, catalyzes the addition and repair of the essential 3'-terminal CCA sequence in tRNAs without using a nucleic acid template. Adds these three nucleotides in the order of C, C, and A to the tRNA nucleotide-73, using CTP and ATP as substrates and producing inorganic pyrophosphate. tRNA 3'-terminal CCA addition is required both for tRNA processing and repair. Also involved in tRNA surveillance by mediating tandem CCA addition to generate a CCACCA at the 3' terminus of unstable tRNAs. While stable tRNAs receive only 3'-terminal CCA, unstable tRNAs are marked with CCACCA and rapidly degraded. This chain is CCA-adding enzyme, found in Latilactobacillus sakei subsp. sakei (strain 23K) (Lactobacillus sakei subsp. sakei).